The primary structure comprises 821 residues: Glycogen phosphorylase (821 aa).

K667 carries the post-translational modification N6-(pyridoxal phosphate)lysine.

The protein belongs to the glycogen phosphorylase family. Requires pyridoxal 5'-phosphate as cofactor.

The enzyme catalyses [(1-&gt;4)-alpha-D-glucosyl](n) + phosphate = [(1-&gt;4)-alpha-D-glucosyl](n-1) + alpha-D-glucose 1-phosphate. Its function is as follows. Phosphorylase is an important allosteric enzyme in carbohydrate metabolism. Enzymes from different sources differ in their regulatory mechanisms and in their natural substrates. However, all known phosphorylases share catalytic and structural properties. The chain is Glycogen phosphorylase (glgP) from Haemophilus influenzae (strain ATCC 51907 / DSM 11121 / KW20 / Rd).